Here is a 404-residue protein sequence, read N- to C-terminus: NADH-quinone oxidoreductase subunit D 1 (404 aa).

Belongs to the complex I 49 kDa subunit family. As to quaternary structure, NDH-1 is composed of 14 different subunits. Subunits NuoB, C, D, E, F, and G constitute the peripheral sector of the complex.

It is found in the cell membrane. It catalyses the reaction a quinone + NADH + 5 H(+)(in) = a quinol + NAD(+) + 4 H(+)(out). Functionally, NDH-1 shuttles electrons from NADH, via FMN and iron-sulfur (Fe-S) centers, to quinones in the respiratory chain. The immediate electron acceptor for the enzyme in this species is believed to be a menaquinone. Couples the redox reaction to proton translocation (for every two electrons transferred, four hydrogen ions are translocated across the cytoplasmic membrane), and thus conserves the redox energy in a proton gradient. This Symbiobacterium thermophilum (strain DSM 24528 / JCM 14929 / IAM 14863 / T) protein is NADH-quinone oxidoreductase subunit D 1.